The sequence spans 216 residues: Heart- and neural crest derivatives-expressed protein 2 (216 aa).

The tract at residues 74 to 115 (MDHSHYGGVPPGSGPPGLGGPRPVKRRGTANRKERRRTQSIN) is disordered. Positions 82-93 (VPPGSGPPGLGG) are enriched in gly residues. Residues 96–111 (PVKRRGTANRKERRRT) show a composition bias toward basic residues. The 53-residue stretch at 98 to 150 (KRRGTANRKERRRTQSINSAFAELRECIPNVPADTKLSKIKTLRLATSYIAYL) folds into the bHLH domain.

As to quaternary structure, efficient DNA binding requires dimerization with another bHLH protein.

Its subcellular location is the nucleus. Essential for cardiac morphogenesis. Binds DNA on E-box consensus sequence 5'-CANNTG-3'. Plays an important role in limb development, particularly in the establishment of anterior-posterior polarization of the limb bud. The chain is Heart- and neural crest derivatives-expressed protein 2 (HAND2) from Gallus gallus (Chicken).